Reading from the N-terminus, the 539-residue chain is Effector protein hopAB1 (539 aa).

4 disordered regions span residues 1–93 (MPGI…PEAQ), 163–220 (QTVR…RHPQ), 230–249 (ASAA…LRRL), and 315–336 (RQTT…SGRR). Residues 18-31 (TDGEPVTEREHDSS) are compositionally biased toward basic and acidic residues. Low complexity predominate over residues 181-194 (SSSGSSQRSLIGRS).

The protein belongs to the HopAB family.

It localises to the secreted. In terms of biological role, effector protein that plays different roles depending on the species and plant cultivars that interact with the pathogen. Acts as a virulence determinant by enhancing the development of disease symptoms and bacterial growth. Acts as an avirulence factor by eliciting hypersensitive response (HR) and plant resistance. The chain is Effector protein hopAB1 (hopAB1) from Pseudomonas savastanoi pv. phaseolicola (strain 1448A / Race 6) (Pseudomonas syringae pv. phaseolicola (strain 1448A / Race 6)).